Here is a 228-residue protein sequence, read N- to C-terminus: U1 small nuclear ribonucleoprotein C (228 aa).

Residues 4-36 form a Matrin-type zinc finger; that stretch reads YYCEYCDIYLTHSSPVGRRQHVQGRKHISAKIE. Residues 179 to 190 are compositionally biased toward basic and acidic residues; that stretch reads LVKDNPNEERNG. A disordered region spans residues 179–228; it reads LVKDNPNEERNGDSAIANQPSTMHHEEDQDDPANATGGTANNNDNVSINA. Positions 211–221 are enriched in low complexity; it reads ANATGGTANNN.

This sequence belongs to the U1 small nuclear ribonucleoprotein C family. As to quaternary structure, U1 snRNP is composed of the 7 core Sm proteins B/B', D1, D2, D3, E, F and G that assemble in a heptameric protein ring on the Sm site of the small nuclear RNA to form the core snRNP, and at least 3 U1 snRNP-specific proteins U1-70K, U1-A and U1-C. U1-C interacts with U1 snRNA and the 5' splice-site region of the pre-mRNA.

The protein localises to the nucleus. In terms of biological role, component of the spliceosomal U1 snRNP, which is essential for recognition of the pre-mRNA 5' splice-site and the subsequent assembly of the spliceosome. U1-C is directly involved in initial 5' splice-site recognition for both constitutive and regulated alternative splicing. The interaction with the 5' splice-site seems to precede base-pairing between the pre-mRNA and the U1 snRNA. Stimulates commitment or early (E) complex formation by stabilizing the base pairing of the 5' end of the U1 snRNA and the 5' splice-site region. This chain is U1 small nuclear ribonucleoprotein C, found in Plasmodium knowlesi (strain H).